A 106-amino-acid chain; its full sequence is ATP-dependent Clp protease adapter protein ClpS (106 aa).

The segment covering 1 to 10 has biased composition (basic and acidic residues); the sequence is MSQKTVHDQD. Residues 1 to 22 are disordered; sequence MSQKTVHDQDNALLLETGNTKV.

This sequence belongs to the ClpS family. In terms of assembly, binds to the N-terminal domain of the chaperone ClpA.

Functionally, involved in the modulation of the specificity of the ClpAP-mediated ATP-dependent protein degradation. The chain is ATP-dependent Clp protease adapter protein ClpS from Xylella fastidiosa (strain 9a5c).